Consider the following 95-residue polypeptide: Small ribosomal subunit protein uS15 (95 aa).

This sequence belongs to the universal ribosomal protein uS15 family. In terms of assembly, part of the 30S ribosomal subunit. Forms a bridge to the 50S subunit in the 70S ribosome, contacting the 23S rRNA.

Its function is as follows. One of the primary rRNA binding proteins, it binds directly to 16S rRNA where it helps nucleate assembly of the platform of the 30S subunit by binding and bridging several RNA helices of the 16S rRNA. Forms an intersubunit bridge (bridge B4) with the 23S rRNA of the 50S subunit in the ribosome. This is Small ribosomal subunit protein uS15 from Sulfurihydrogenibium sp. (strain YO3AOP1).